The primary structure comprises 110 residues: Inner membrane protein YgiZ (110 aa).

Residues 1–8 are Cytoplasmic-facing; it reads MLKQKIKT. Residues 9–29 traverse the membrane as a helical segment; that stretch reads IFEALLYIMLTYWLIDSFFAF. At 30-53 the chain is on the periplasmic side; that stretch reads NKYDWMLESGGNICSIPSVSGEDR. A helical membrane pass occupies residues 54–74; the sequence is ILQAMIAAFFLLTPLIILILR. At 75–83 the chain is on the cytoplasmic side; that stretch reads KLFMREMFE. The helical transmembrane segment at 84–104 threads the bilayer; that stretch reads FWVYVFSLGICLVCGWWLFWG. The Periplasmic segment spans residues 105-110; it reads RFIFCY.

Its subcellular location is the cell inner membrane. The polypeptide is Inner membrane protein YgiZ (ygiZ) (Escherichia coli (strain K12)).